The primary structure comprises 788 residues: Protein translocase subunit SecA (788 aa).

ATP is bound by residues Q85, 103–107 (GEGKT), and D494.

The protein belongs to the SecA family. Monomer and homodimer. Part of the essential Sec protein translocation apparatus which comprises SecA, SecYEG and auxiliary proteins SecDF. Other proteins may also be involved.

It localises to the cell membrane. The protein localises to the cytoplasm. It catalyses the reaction ATP + H2O + cellular proteinSide 1 = ADP + phosphate + cellular proteinSide 2.. Its function is as follows. Part of the Sec protein translocase complex. Interacts with the SecYEG preprotein conducting channel. Has a central role in coupling the hydrolysis of ATP to the transfer of proteins into and across the cell membrane, serving as an ATP-driven molecular motor driving the stepwise translocation of polypeptide chains across the membrane. The polypeptide is Protein translocase subunit SecA (Oenococcus oeni (strain ATCC BAA-331 / PSU-1)).